The primary structure comprises 227 residues: ATP synthase F(0) complex subunit a (227 aa).

6 helical membrane passes run 14-34 (FLGI…IPTP), 73-93 (LASL…PYIF), 98-118 (QLSL…LIGM), 137-157 (ALIP…PLAL), 179-199 (VFVL…LLLL), and 203-223 (LEVA…SLYL).

This sequence belongs to the ATPase A chain family. In terms of assembly, component of the ATP synthase complex composed at least of ATP5F1A/subunit alpha, ATP5F1B/subunit beta, ATP5MC1/subunit c (homooctomer), MT-ATP6/subunit a, MT-ATP8/subunit 8, ATP5ME/subunit e, ATP5MF/subunit f, ATP5MG/subunit g, ATP5MK/subunit k, ATP5MJ/subunit j, ATP5F1C/subunit gamma, ATP5F1D/subunit delta, ATP5F1E/subunit epsilon, ATP5PF/subunit F6, ATP5PB/subunit b, ATP5PD/subunit d, ATP5PO/subunit OSCP. ATP synthase complex consists of a soluble F(1) head domain (subunits alpha(3) and beta(3)) - the catalytic core - and a membrane F(0) domain - the membrane proton channel (subunits c, a, 8, e, f, g, k and j). These two domains are linked by a central stalk (subunits gamma, delta, and epsilon) rotating inside the F1 region and a stationary peripheral stalk (subunits F6, b, d, and OSCP). Interacts with DNAJC30; interaction is direct.

It is found in the mitochondrion inner membrane. The catalysed reaction is H(+)(in) = H(+)(out). Subunit a, of the mitochondrial membrane ATP synthase complex (F(1)F(0) ATP synthase or Complex V) that produces ATP from ADP in the presence of a proton gradient across the membrane which is generated by electron transport complexes of the respiratory chain. ATP synthase complex consist of a soluble F(1) head domain - the catalytic core - and a membrane F(1) domain - the membrane proton channel. These two domains are linked by a central stalk rotating inside the F(1) region and a stationary peripheral stalk. During catalysis, ATP synthesis in the catalytic domain of F(1) is coupled via a rotary mechanism of the central stalk subunits to proton translocation. With the subunit c (ATP5MC1), forms the proton-conducting channel in the F(0) domain, that contains two crucial half-channels (inlet and outlet) that facilitate proton movement from the mitochondrial intermembrane space (IMS) into the matrix. Protons are taken up via the inlet half-channel and released through the outlet half-channel, following a Grotthuss mechanism. In Gadus morhua (Atlantic cod), this protein is ATP synthase F(0) complex subunit a.